A 336-amino-acid polypeptide reads, in one-letter code: Hdr-like menaquinol oxidoreductase cytochrome b-like subunit (336 aa).

The next 6 membrane-spanning stretches (helical) occupy residues 4–24 (ALYIFYALPYICFAIFVIGTI), 60–80 (IDSPSSKFWAFVRVLFVVFLF), 102–122 (WLWLFAILFHYSLLVIVIRHL), 145–165 (VAIVPPLLMTGVIALVALAFL), 184–204 (HLILFFMAVILVSGLLMRYII), and 232–252 (LHWLFLIHFTFVCITIAYIPF).

Its subcellular location is the cell membrane. Functionally, has menaquinol-oxidizing activity. The HmeC and HmeD subunits may together mediate electron transfer from menaquinol to an unidentified electron acceptor on the cytoplasmic side of the membrane. The protein is Hdr-like menaquinol oxidoreductase cytochrome b-like subunit (hmeC) of Archaeoglobus profundus (strain DSM 5631 / JCM 9629 / NBRC 100127 / Av18).